A 284-amino-acid polypeptide reads, in one-letter code: uncharacterized protein (284 aa).

The N-terminal stretch at 1–23 (MKRGCAIAVMICGLITSVSAASA) is a signal peptide.

Belongs to the surface antigen msp4 family.

This is an uncharacterized protein from Brucella abortus (strain 2308).